The following is a 434-amino-acid chain: Methylenetetrahydrofolate--tRNA-(uracil-5-)-methyltransferase TrmFO (434 aa).

9 to 14 lines the FAD pocket; that stretch reads GAGLAG.

This sequence belongs to the MnmG family. TrmFO subfamily. The cofactor is FAD.

The protein localises to the cytoplasm. It carries out the reaction uridine(54) in tRNA + (6R)-5,10-methylene-5,6,7,8-tetrahydrofolate + NADH + H(+) = 5-methyluridine(54) in tRNA + (6S)-5,6,7,8-tetrahydrofolate + NAD(+). It catalyses the reaction uridine(54) in tRNA + (6R)-5,10-methylene-5,6,7,8-tetrahydrofolate + NADPH + H(+) = 5-methyluridine(54) in tRNA + (6S)-5,6,7,8-tetrahydrofolate + NADP(+). In terms of biological role, catalyzes the folate-dependent formation of 5-methyl-uridine at position 54 (M-5-U54) in all tRNAs. The protein is Methylenetetrahydrofolate--tRNA-(uracil-5-)-methyltransferase TrmFO of Bacillus licheniformis (strain ATCC 14580 / DSM 13 / JCM 2505 / CCUG 7422 / NBRC 12200 / NCIMB 9375 / NCTC 10341 / NRRL NRS-1264 / Gibson 46).